Here is a 268-residue protein sequence, read N- to C-terminus: Purine nucleoside phosphorylase (268 aa).

Residues Ser36, His68, 88 to 90 (RIH), and Ala120 contribute to the phosphate site. Glu189 lines the a purine D-ribonucleoside pocket. A phosphate-binding site is contributed by Ser208. A purine D-ribonucleoside is bound at residue Asn231.

This sequence belongs to the PNP/MTAP phosphorylase family. Homotrimer.

It carries out the reaction a purine 2'-deoxy-D-ribonucleoside + phosphate = a purine nucleobase + 2-deoxy-alpha-D-ribose 1-phosphate. It functions in the pathway purine metabolism; purine nucleoside salvage. In terms of biological role, the purine nucleoside phosphorylases catalyze the phosphorolytic breakdown of the N-glycosidic bond in the beta-(deoxy)ribonucleoside molecules, with the formation of the corresponding free purine bases and pentose-1-phosphate. Cleaves guanosine, inosine, 2'-deoxyguanosine and 2'-deoxyinosine. This chain is Purine nucleoside phosphorylase (punA), found in Mycobacterium bovis (strain ATCC BAA-935 / AF2122/97).